The primary structure comprises 336 residues: Atypical chemokine receptor 1 (336 aa).

Over 1-63 (MGNCLHQAEL…CNLLDDSSLP (63 aa)) the chain is Extracellular. 2 N-linked (GlcNAc...) asparagine glycosylation sites follow: Asn-16 and Asn-33. Cystine bridges form between Cys-51-Cys-276 and Cys-129-Cys-195. The chain crosses the membrane as a helical span at residues 64–84 (FFILASVLGILASSTVLFMLF). Residues 85-95 (RPLFRWQLCPG) lie on the Cytoplasmic side of the membrane. A helical transmembrane segment spans residues 96 to 116 (WPVLAQLAVGSALFSIVVPIL). Over 117-129 (APGLGNTRSSALC) the chain is Extracellular. A helical transmembrane segment spans residues 130-153 (SLGYCVWYGSAFAQALLLGCHASL). Topologically, residues 154 to 166 (GPKLGAGQVPGLT) are cytoplasmic. The helical transmembrane segment at 167–187 (LGLTVGLWGAAALLTVPITLA) threads the bilayer. The Extracellular portion of the chain corresponds to 188–207 (SGASDGLCTPIYSTELKALQ). The helical transmembrane segment at 208 to 228 (ATHTVACFAIFVLLPLGLFGA) threads the bilayer. Topologically, residues 229–244 (KGVKKALGMGPGPWMT) are cytoplasmic. The helical transmembrane segment at 245 to 265 (ILWIWFIFWWPHGVVLGLDFL) threads the bilayer. Residues 266–287 (VRSKLLLLPTCLAQQVLDLLLN) are Extracellular-facing. Residues 288–308 (LAEALTIVHCVATPLLLALFC) traverse the membrane as a helical segment. Over 309–336 (HQATRTLLPSLPLPERWSSPVDTLGSKS) the chain is Cytoplasmic.

This sequence belongs to the G-protein coupled receptor 1 family. Atypical chemokine receptor subfamily.

Its subcellular location is the early endosome. It is found in the recycling endosome. The protein localises to the membrane. Its function is as follows. Atypical chemokine receptor that controls chemokine levels and localization via high-affinity chemokine binding that is uncoupled from classic ligand-driven signal transduction cascades, resulting instead in chemokine sequestration, degradation, or transcytosis. Also known as interceptor (internalizing receptor) or chemokine-scavenging receptor or chemokine decoy receptor. Has a promiscuous chemokine-binding profile, interacting with inflammatory chemokines of both the CXC and the CC subfamilies but not with homeostatic chemokines. Acts as a receptor for chemokines including CCL2, CCL5, CCL7, CCL11, CCL13, CCL14, CCL17, CXCL5, CXCL6, IL8/CXCL8, CXCL11, GRO, RANTES, MCP-1 and TARC. May regulate chemokine bioavailability and, consequently, leukocyte recruitment through two distinct mechanisms: when expressed in endothelial cells, it sustains the abluminal to luminal transcytosis of tissue-derived chemokines and their subsequent presentation to circulating leukocytes; when expressed in erythrocytes, serves as blood reservoir of cognate chemokines but also as a chemokine sink, buffering potential surges in plasma chemokine levels. This is Atypical chemokine receptor 1 (ACKR1) from Sapajus apella (Brown-capped capuchin).